A 316-amino-acid chain; its full sequence is MLNVILLGTGGGMPMPNRFLSSVVMNFKGRKILLDCGEGTQVTMRVNGTGFKSIDIICISHLHGDHIYGLPGLLSTIGNSGRVEDIYIIGPKGIKEVIEGFLITLPYLPYKLNILEDASNLEFMVKKEKMELVEEDEKISSDLSIKTLELDHSSPCLGYSFNIRRGRKFNLEKALMNKVPKEVWSKLQRNEEVSLNGVKYYSYMVLGDERKGIKLSYTTDTRPTEDIPGFIKESDLYICEGTYGSEEDMHKAIKNKHMTFKEAANLAKRGQVKELLLTHFSPAINDPKEFINNAREAFENSHVGSDGEERVLNFKK.

Zn(2+)-binding residues include His-61, His-63, Asp-65, His-66, His-152, Asp-220, and His-279. Asp-65 acts as the Proton acceptor in catalysis.

Belongs to the RNase Z family. As to quaternary structure, homodimer. Zn(2+) is required as a cofactor.

The enzyme catalyses Endonucleolytic cleavage of RNA, removing extra 3' nucleotides from tRNA precursor, generating 3' termini of tRNAs. A 3'-hydroxy group is left at the tRNA terminus and a 5'-phosphoryl group is left at the trailer molecule.. In terms of biological role, zinc phosphodiesterase, which displays some tRNA 3'-processing endonuclease activity. Probably involved in tRNA maturation, by removing a 3'-trailer from precursor tRNA. This is Ribonuclease Z from Clostridium perfringens (strain ATCC 13124 / DSM 756 / JCM 1290 / NCIMB 6125 / NCTC 8237 / Type A).